Consider the following 297-residue polypeptide: Mitochondrial citrate transporter A (297 aa).

Solcar repeat units follow at residues P12–L91, P102–M188, and L199–A286. 6 helical membrane-spanning segments follow: residues I18–I31, S61–R81, I99–A119, F160–S180, Y192–G212, and K251–S272.

It belongs to the mitochondrial carrier (TC 2.A.29) family.

The protein localises to the mitochondrion inner membrane. The enzyme catalyses citrate(in) + H(+)(in) = citrate(out) + H(+)(out). Its function is as follows. Mitochondrial transporter that mediates citrate export from mitochondria to cytoplasm. Both ctpA, ctpB, and ctpD play important roles in citric acid transport across the mitochondrial membrane and function in a redundant manner. The polypeptide is Mitochondrial citrate transporter A (Aspergillus niger (strain ATCC 1015 / CBS 113.46 / FGSC A1144 / LSHB Ac4 / NCTC 3858a / NRRL 328 / USDA 3528.7)).